The chain runs to 94 residues: ATP synthase subunit c (94 aa).

Transmembrane regions (helical) follow at residues 15-35 (IGVGVILAAAGLGSAIGWGLI) and 58-78 (FIFAGLMESFPFIILAFAMWF).

The protein belongs to the ATPase C chain family. F-type ATPases have 2 components, F(1) - the catalytic core - and F(0) - the membrane proton channel. F(1) has five subunits: alpha(3), beta(3), gamma(1), delta(1), epsilon(1). F(0) has three main subunits: a(1), b(2) and c(10-14). The alpha and beta chains form an alternating ring which encloses part of the gamma chain. F(1) is attached to F(0) by a central stalk formed by the gamma and epsilon chains, while a peripheral stalk is formed by the delta and b chains.

It is found in the cell inner membrane. F(1)F(0) ATP synthase produces ATP from ADP in the presence of a proton or sodium gradient. F-type ATPases consist of two structural domains, F(1) containing the extramembraneous catalytic core and F(0) containing the membrane proton channel, linked together by a central stalk and a peripheral stalk. During catalysis, ATP synthesis in the catalytic domain of F(1) is coupled via a rotary mechanism of the central stalk subunits to proton translocation. Functionally, key component of the F(0) channel; it plays a direct role in translocation across the membrane. A homomeric c-ring of between 10-14 subunits forms the central stalk rotor element with the F(1) delta and epsilon subunits. The polypeptide is ATP synthase subunit c (Hydrogenovibrio crunogenus (strain DSM 25203 / XCL-2) (Thiomicrospira crunogena)).